Here is a 449-residue protein sequence, read N- to C-terminus: Cysteine--tRNA ligase (449 aa).

Cys-30 provides a ligand contact to Zn(2+). The 'HIGH' region motif lies at 32–42 (PTVYDRAHLGN). Residues Cys-210, His-235, and Glu-239 each contribute to the Zn(2+) site. The 'KMSKS' region signature appears at 268 to 272 (KMSKS). Lys-271 serves as a coordination point for ATP.

The protein belongs to the class-I aminoacyl-tRNA synthetase family. Monomer. Requires Zn(2+) as cofactor.

It localises to the cytoplasm. It carries out the reaction tRNA(Cys) + L-cysteine + ATP = L-cysteinyl-tRNA(Cys) + AMP + diphosphate. This Acidiphilium cryptum (strain JF-5) protein is Cysteine--tRNA ligase.